A 91-amino-acid polypeptide reads, in one-letter code: Small ribosomal subunit protein uS19 (91 aa).

This sequence belongs to the universal ribosomal protein uS19 family.

Its function is as follows. Protein S19 forms a complex with S13 that binds strongly to the 16S ribosomal RNA. The protein is Small ribosomal subunit protein uS19 of Methylibium petroleiphilum (strain ATCC BAA-1232 / LMG 22953 / PM1).